A 328-amino-acid chain; its full sequence is Bifunctional phosphopantetheine adenylyltransferase/NTP phosphatase (328 aa).

The segment at 1 to 152 (MITVVGGTFS…TNGKRITPLK (152 aa)) is phosphopantetheine adenylyltransferase. The tract at residues 153-328 (VGISTRNEAK…DFYDSTYTPP (176 aa)) is inosine/xanthosine triphosphatase.

This sequence in the N-terminal section; belongs to the eukaryotic CoaD family. The protein in the C-terminal section; belongs to the YjjX NTPase family. Mg(2+) serves as cofactor. Requires Mn(2+) as cofactor.

Its subcellular location is the cytoplasm. It catalyses the reaction (R)-4'-phosphopantetheine + ATP + H(+) = 3'-dephospho-CoA + diphosphate. The enzyme catalyses XTP + H2O = XDP + phosphate + H(+). It carries out the reaction ITP + H2O = IDP + phosphate + H(+). Its pathway is cofactor biosynthesis; coenzyme A biosynthesis. Its function is as follows. Reversibly transfers an adenylyl group from ATP to 4'-phosphopantetheine, yielding dephospho-CoA (dPCoA) and pyrophosphate. Phosphatase that hydrolyzes non-canonical purine nucleotides such as XTP and ITP to their respective diphosphate derivatives. Probably excludes non-canonical purines from DNA/RNA precursor pool, thus preventing their incorporation into DNA/RNA and avoiding chromosomal lesions. In Thermoplasma acidophilum (strain ATCC 25905 / DSM 1728 / JCM 9062 / NBRC 15155 / AMRC-C165), this protein is Bifunctional phosphopantetheine adenylyltransferase/NTP phosphatase (coaD).